Consider the following 449-residue polypeptide: Packaging protein 1 (449 aa).

Residues 1–78 (METRGRRPAA…PAKRGDMLDR (78 aa)) are disordered. 171–178 (GPTGCGKS) provides a ligand contact to ATP. The DNA-binding stretch occupies residues 440–449 (RAYRARKTPK).

The protein belongs to the adenoviridae packaging protein 1 family. In terms of assembly, homodimer. Part of a genome packaging complex composed of packaging proteins 1, 2 and 3; this complex specifically binds to the packaging sequence on the left end of viral genomic DNA and performs packaging of the viral genome. Interacts with protein 33K.

Its subcellular location is the virion. The protein resides in the host nucleus. It localises to the host nucleoplasm. The protein localises to the host nucleolus. Component of the packaging machinery which encapsidates the viral DNA into preformed capsids and transcriptional activator of the viral major late promoter (MLP). Binds, along with packaging proteins 2 and 3, to the specific packaging sequence on the left end of viral genomic DNA and displays ATPase activity thereby providing the power stroke of the packaging machinery. The activity of packaging protein IVa2 is stimulated by protein 33K which acts as a terminase. May be the protein that pumps DNA into the capsid powered by ATP hydrolysis. Specifically binds to the 5'-CG-3' nucleotides of the repeats making up the packaging sequence. Component of the DEF-A and DEF-B transcription factors that bind downstream elements of the major late promoter (MLP), and stimulate transcription from the MLP after initiation of viral DNA replication. DEF-A is a heterodimer packaging proteins 1 and 2 and DEF-B is a homodimer of packaging protein 1. The sequence is that of Packaging protein 1 from Human adenovirus C serotype 5 (HAdV-5).